A 62-amino-acid chain; its full sequence is UPF0434 protein Tola_2233 (62 aa).

Belongs to the UPF0434 family.

The polypeptide is UPF0434 protein Tola_2233 (Tolumonas auensis (strain DSM 9187 / NBRC 110442 / TA 4)).